A 90-amino-acid polypeptide reads, in one-letter code: Actobindin-B/C (90 aa).

WH2 domains follow at residues 4-21 and 40-57; these read TANPLLAEINKGTDLKHA and DHSSLLGEVEKGAQLKHV. Positions 57–90 are disordered; it reads VETQDRSAPVTEGATVKSNNHSALLGEIKSKAQE.

In terms of assembly, monomer.

Is able to bind two actin monomers at high concentrations of G-actin. Inhibits actin polymerization by sequestering G-actin and stabilizing actin dimers. The sequence is that of Actobindin-B/C (abnB) from Dictyostelium discoideum (Social amoeba).